An 877-amino-acid polypeptide reads, in one-letter code: Leucine--tRNA ligase (877 aa).

Positions 43 to 53 (PYPSGRIHMGH) match the 'HIGH' region motif. Positions 628-632 (KMSKS) match the 'KMSKS' region motif. K631 contributes to the ATP binding site.

This sequence belongs to the class-I aminoacyl-tRNA synthetase family.

It localises to the cytoplasm. It catalyses the reaction tRNA(Leu) + L-leucine + ATP = L-leucyl-tRNA(Leu) + AMP + diphosphate. The sequence is that of Leucine--tRNA ligase from Brucella anthropi (strain ATCC 49188 / DSM 6882 / CCUG 24695 / JCM 21032 / LMG 3331 / NBRC 15819 / NCTC 12168 / Alc 37) (Ochrobactrum anthropi).